The primary structure comprises 368 residues: Chaperone protein DnaJ (368 aa).

Residues 5–70 (DYYEVLGVSK…EKRSMYDRMG (66 aa)) enclose the J domain. A CR-type zinc finger spans residues 132-210 (GVKKTITFTA…CHGSGVADRQ (79 aa)). Zn(2+) contacts are provided by Cys145, Cys148, Cys162, Cys165, Cys184, Cys187, Cys198, and Cys201. 4 CXXCXGXG motif repeats span residues 145 to 152 (CEVCDGKG), 162 to 169 (CRTCHGTG), 184 to 191 (CGTCRGQG), and 198 to 205 (CQSCHGSG). Residues 349–368 (DGDEHSSSPKKKSFFDRLFD) are disordered. The span at 350-368 (GDEHSSSPKKKSFFDRLFD) shows a compositional bias: basic and acidic residues.

Belongs to the DnaJ family. As to quaternary structure, homodimer. Requires Zn(2+) as cofactor.

The protein resides in the cytoplasm. Functionally, participates actively in the response to hyperosmotic and heat shock by preventing the aggregation of stress-denatured proteins and by disaggregating proteins, also in an autonomous, DnaK-independent fashion. Unfolded proteins bind initially to DnaJ; upon interaction with the DnaJ-bound protein, DnaK hydrolyzes its bound ATP, resulting in the formation of a stable complex. GrpE releases ADP from DnaK; ATP binding to DnaK triggers the release of the substrate protein, thus completing the reaction cycle. Several rounds of ATP-dependent interactions between DnaJ, DnaK and GrpE are required for fully efficient folding. Also involved, together with DnaK and GrpE, in the DNA replication of plasmids through activation of initiation proteins. The chain is Chaperone protein DnaJ from Acinetobacter baylyi (strain ATCC 33305 / BD413 / ADP1).